Here is a 602-residue protein sequence, read N- to C-terminus: Elongation factor 4 (602 aa).

Positions 7–189 (KRVRNFSIIA…AVVEKVPYPK (183 aa)) constitute a tr-type G domain. GTP contacts are provided by residues 19–24 (DHGKST) and 136–139 (NKID).

It belongs to the TRAFAC class translation factor GTPase superfamily. Classic translation factor GTPase family. LepA subfamily.

The protein resides in the cell membrane. It carries out the reaction GTP + H2O = GDP + phosphate + H(+). Its function is as follows. Required for accurate and efficient protein synthesis under certain stress conditions. May act as a fidelity factor of the translation reaction, by catalyzing a one-codon backward translocation of tRNAs on improperly translocated ribosomes. Back-translocation proceeds from a post-translocation (POST) complex to a pre-translocation (PRE) complex, thus giving elongation factor G a second chance to translocate the tRNAs correctly. Binds to ribosomes in a GTP-dependent manner. This chain is Elongation factor 4, found in Clostridium tetani (strain Massachusetts / E88).